Consider the following 86-residue polypeptide: Small ribosomal subunit protein bS18 (86 aa).

The protein belongs to the bacterial ribosomal protein bS18 family. In terms of assembly, part of the 30S ribosomal subunit. Forms a tight heterodimer with protein bS6.

Binds as a heterodimer with protein bS6 to the central domain of the 16S rRNA, where it helps stabilize the platform of the 30S subunit. This Campylobacter lari (strain RM2100 / D67 / ATCC BAA-1060) protein is Small ribosomal subunit protein bS18.